Reading from the N-terminus, the 210-residue chain is T-cell surface glycoprotein CD8 beta-2 chain (210 aa).

An N-terminal signal peptide occupies residues 1 to 18; it reads MRPRLWLLLAAQLTVLHG. One can recognise an Ig-like V-type domain in the interval 19–132; that stretch reads NSVLQQTPAY…ELTFGKGTQL (114 aa). The Extracellular portion of the chain corresponds to 19–170; the sequence is NSVLQQTPAY…ETQKGPLCSP (152 aa). C41 and C116 form a disulfide bridge. N102 carries N-linked (GlcNAc...) asparagine glycosylation. A helical transmembrane segment spans residues 171 to 191; sequence VTLGLLVAGVLVLLVSLGVAM. Over 192–210 the chain is Cytoplasmic; it reads HLCCRRRRARLRFMKQFYK.

In general heterodimer of an alpha and a beta chain linked by two disulfide bonds.

The protein localises to the cell membrane. In terms of biological role, identifies cytotoxic/suppressor T-cells that interact with MHC class I bearing targets. CD8 is thought to play a role in the process of T-cell mediated killing. This chain is T-cell surface glycoprotein CD8 beta-2 chain, found in Homo sapiens (Human).